The sequence spans 448 residues: tRNA modification GTPase MnmE (448 aa).

Residues R24, E81, and K120 each coordinate (6S)-5-formyl-5,6,7,8-tetrahydrofolate. The region spanning 216-373 (GLNVVLVGAP…LKRTLLREAG (158 aa)) is the TrmE-type G domain. N226 serves as a coordination point for K(+). GTP contacts are provided by residues 226 to 231 (NVGKSS), 245 to 251 (TDIAGTT), and 270 to 273 (DTAG). S230 contributes to the Mg(2+) binding site. K(+) contacts are provided by T245, I247, and T250. T251 contributes to the Mg(2+) binding site. K448 is a (6S)-5-formyl-5,6,7,8-tetrahydrofolate binding site.

The protein belongs to the TRAFAC class TrmE-Era-EngA-EngB-Septin-like GTPase superfamily. TrmE GTPase family. Homodimer. Heterotetramer of two MnmE and two MnmG subunits. The cofactor is K(+).

The protein resides in the cytoplasm. Its function is as follows. Exhibits a very high intrinsic GTPase hydrolysis rate. Involved in the addition of a carboxymethylaminomethyl (cmnm) group at the wobble position (U34) of certain tRNAs, forming tRNA-cmnm(5)s(2)U34. The protein is tRNA modification GTPase MnmE of Neisseria meningitidis serogroup C / serotype 2a (strain ATCC 700532 / DSM 15464 / FAM18).